We begin with the raw amino-acid sequence, 217 residues long: Large ribosomal subunit protein uL3 (217 aa).

Gln-152 is modified (N5-methylglutamine).

It belongs to the universal ribosomal protein uL3 family. As to quaternary structure, part of the 50S ribosomal subunit. Forms a cluster with proteins L14 and L19. Post-translationally, methylated by PrmB.

Its function is as follows. One of the primary rRNA binding proteins, it binds directly near the 3'-end of the 23S rRNA, where it nucleates assembly of the 50S subunit. The protein is Large ribosomal subunit protein uL3 of Blochmanniella pennsylvanica (strain BPEN).